Consider the following 82-residue polypeptide: DNA-directed RNA polymerase subunit Rpo5 (82 aa).

Belongs to the archaeal Rpo5/eukaryotic RPB5 RNA polymerase subunit family. As to quaternary structure, part of the RNA polymerase complex.

The protein resides in the cytoplasm. The enzyme catalyses RNA(n) + a ribonucleoside 5'-triphosphate = RNA(n+1) + diphosphate. Its function is as follows. DNA-dependent RNA polymerase (RNAP) catalyzes the transcription of DNA into RNA using the four ribonucleoside triphosphates as substrates. The chain is DNA-directed RNA polymerase subunit Rpo5 from Pyrococcus horikoshii (strain ATCC 700860 / DSM 12428 / JCM 9974 / NBRC 100139 / OT-3).